The following is a 481-amino-acid chain: MAENTDRNQIEKLLNRVKELEQEVERLKKKKEQANNIKDSSIRENSLGSGKAKRAFDFSAHGRRHVALKIAYLGWGYQGFASQENTSNTIEEKLFEALTKTRLVESRQTSNYHRCGRTDKGVSAFGQVISLDLRSQFPTSRDSEDSNLKHEADDLAKEIRYTHILNRVLPADIRVLAWAPVEPSFSARFSCLERTYRYFFPRADLDIATMNYAAQKYVGTHDFRNLCKMDVANGVINFQRTILCAQVQLVAQSPGEERRQEPFQLCQFEVIGQAFLYHQVRCMMAILFLIGQGMEKPEIIDELLNIQKNPQKPQYSMAVEFPLVLYDCKFENTKWIYDHEVQEFNVTHLQQLWANHAVKTHMLYSMLQGLDSVMVTCAAGTKMDEATEWRNIQPPVIKHTSAFVEGVKMRTYKPLMDRPKCQGLESRIRHFVSRGRIEHPHLLHKEEIKARRDCADKEENTVVENPSKRVCIIDAEINSIA.

N-acetylalanine is present on Ala-2. Asp-119 serves as the catalytic Nucleophile. Position 196 (Tyr-196) interacts with substrate.

Belongs to the tRNA pseudouridine synthase TruA family.

The protein resides in the nucleus. It catalyses the reaction uridine(38/39) in tRNA = pseudouridine(38/39) in tRNA. Formation of pseudouridine at position 39 in the anticodon stem and loop of transfer RNAs. Also acts on position 38, but much less efficiently. The protein is tRNA pseudouridine(38/39) synthase (Pus3) of Mus musculus (Mouse).